Reading from the N-terminus, the 321-residue chain is Serine protease 52 (321 aa).

Positions 1-27 (MKRWKDRRTGLLLPLVLLLFGACSSLA) are cleaved as a signal peptide. The Peptidase S1 domain maps to 56 to 287 (IVGGKPANIL…YVRWISKQTA (232 aa)). Cysteine 81 and cysteine 97 are oxidised to a cystine. Catalysis depends on charge relay system residues histidine 96 and aspartate 142. An N-linked (GlcNAc...) asparagine glycan is attached at asparagine 153. 3 cysteine pairs are disulfide-bonded: cysteine 175/cysteine 242, cysteine 208/cysteine 221, and cysteine 232/cysteine 263. Serine 236 functions as the Charge relay system in the catalytic mechanism. The chain crosses the membrane as a helical span at residues 300 to 320 (ACPLVLSCRAILFLYFVMFLL).

It belongs to the peptidase S1 family.

The protein resides in the membrane. Probable serine protease. The sequence is that of Serine protease 52 (Prss52) from Mus musculus (Mouse).